The primary structure comprises 226 residues: Thiamine-phosphate synthase (226 aa).

Residues 46–50 (QFRDK) and Asp83 each bind 4-amino-2-methyl-5-(diphosphooxymethyl)pyrimidine. Asp84 and Asp103 together coordinate Mg(2+). Ser122 lines the 4-amino-2-methyl-5-(diphosphooxymethyl)pyrimidine pocket. 149–151 (TQS) serves as a coordination point for 2-[(2R,5Z)-2-carboxy-4-methylthiazol-5(2H)-ylidene]ethyl phosphate. A 4-amino-2-methyl-5-(diphosphooxymethyl)pyrimidine-binding site is contributed by Lys152. 2-[(2R,5Z)-2-carboxy-4-methylthiazol-5(2H)-ylidene]ethyl phosphate contacts are provided by residues Gly181 and 201–202 (IT).

Belongs to the thiamine-phosphate synthase family. The cofactor is Mg(2+).

It carries out the reaction 2-[(2R,5Z)-2-carboxy-4-methylthiazol-5(2H)-ylidene]ethyl phosphate + 4-amino-2-methyl-5-(diphosphooxymethyl)pyrimidine + 2 H(+) = thiamine phosphate + CO2 + diphosphate. The catalysed reaction is 2-(2-carboxy-4-methylthiazol-5-yl)ethyl phosphate + 4-amino-2-methyl-5-(diphosphooxymethyl)pyrimidine + 2 H(+) = thiamine phosphate + CO2 + diphosphate. The enzyme catalyses 4-methyl-5-(2-phosphooxyethyl)-thiazole + 4-amino-2-methyl-5-(diphosphooxymethyl)pyrimidine + H(+) = thiamine phosphate + diphosphate. It participates in cofactor biosynthesis; thiamine diphosphate biosynthesis; thiamine phosphate from 4-amino-2-methyl-5-diphosphomethylpyrimidine and 4-methyl-5-(2-phosphoethyl)-thiazole: step 1/1. Its function is as follows. Condenses 4-methyl-5-(beta-hydroxyethyl)thiazole monophosphate (THZ-P) and 2-methyl-4-amino-5-hydroxymethyl pyrimidine pyrophosphate (HMP-PP) to form thiamine monophosphate (TMP). The sequence is that of Thiamine-phosphate synthase from Haemophilus influenzae (strain PittGG).